The chain runs to 574 residues: Alpha-mannosidase I MNS5 (574 aa).

Topologically, residues 1–9 are cytoplasmic; it reads MSCPIHPRR. A helical; Signal-anchor for type II membrane protein transmembrane segment spans residues 10 to 26; it reads LFLCLLISLTFFVVDPS. The Lumenal segment spans residues 27–574; sequence SQHIEVKKKQ…VGYCGLWNPL (548 aa). N89, N107, and N121 each carry an N-linked (GlcNAc...) asparagine glycan. The active-site Proton donor is E134. A glycan (N-linked (GlcNAc...) asparagine) is linked at N201. D274 is a catalytic residue. N349 carries N-linked (GlcNAc...) asparagine glycosylation. E367 functions as the Proton donor in the catalytic mechanism. E388 is a catalytic residue. Ca(2+) is bound at residue T471. N-linked (GlcNAc...) asparagine glycosylation occurs at N494.

This sequence belongs to the glycosyl hydrolase 47 family. Ca(2+) serves as cofactor.

The protein resides in the endoplasmic reticulum membrane. It functions in the pathway protein modification; protein glycosylation. Functionally, can convert Man(9)GlcNAc(2) and Man(8)GlcNAc(2) into N-glycans with a terminal alpha-1,6-linked Man residue in the C-branch. Functions in the formation of unique N-glycan structures that are specifically recognized by components of the endoplasmic reticulum-associated degradation (ERAD) machinery, which leads to the degradation of misfolded glycoproteins. Most likely generates N-glycan signal on misfolded glycoproteins that is subsequently recognized by OS9. Required for ERAD of the heavily glycosylated and misfolded BRI1 variants BRI1-5 and BRI1-9. Does not seem to play role in N-glycan processing of correctly folded proteins destined for secretion. In Arabidopsis thaliana (Mouse-ear cress), this protein is Alpha-mannosidase I MNS5 (MNS5).